We begin with the raw amino-acid sequence, 130 residues long: Large ribosomal subunit protein bL17 (130 aa).

Belongs to the bacterial ribosomal protein bL17 family. Part of the 50S ribosomal subunit. Contacts protein L32.

In Shewanella loihica (strain ATCC BAA-1088 / PV-4), this protein is Large ribosomal subunit protein bL17.